Here is a 257-residue protein sequence, read N- to C-terminus: UPF0246 protein BF4021 (257 aa).

The protein belongs to the UPF0246 family.

The polypeptide is UPF0246 protein BF4021 (Bacteroides fragilis (strain YCH46)).